Consider the following 1213-residue polypeptide: Hybrid signal transduction histidine kinase K (1213 aa).

Disordered regions lie at residues 1 to 37 (MIELNNHSKINKNENNTNTRNNSSNNNNNNNNINKTN), 98 to 189 (NNNY…SSSS), 279 to 392 (NKNV…IPFR), and 495 to 565 (TTEQ…NYNN). Composition is skewed to low complexity over residues 98 to 162 (NNNY…QKDQ), 171 to 189 (SLSSSSSSSSLSSSSSSSS), 279 to 331 (NKNV…NSGA), 339 to 371 (NNNNNNNNNNNNNNNNNNNSNSNSNNNSKSNNN), 498 to 511 (QQQQLQQQQQQQQQ), and 522 to 565 (QRQQ…NYNN). 6 consecutive transmembrane segments (helical) span residues 600-618 (IIFNSFNFICSIVLDGSNI), 628-648 (LIIGFCFTILSFIPSWIIFFW), 652-672 (INKPAVMAIIAMPMSISSLVI), 676-696 (TGSIHYPCHILCFTLCFALTI), 729-749 (IQWSLMVLSIYLLFFVANLYG), and 768-788 (IIDVTIIIMTLIFTLCYQYFI). Positions 822 to 1052 (TMSHEIRTPL…TFWFILPLEE (231 aa)) constitute a Histidine kinase domain. H825 carries the post-translational modification Phosphohistidine; by autocatalysis. Residues 1076 to 1199 (KVLIAEDNII…QLRSAIEMAI (124 aa)) form the Response regulatory domain. At D1125 the chain carries 4-aspartylphosphate.

Post-translationally, activation probably requires transfer of a phosphate group between a histidine in the kinase core (transmitter) domain and an aspartate of the receiver domain.

Its subcellular location is the nucleus membrane. The enzyme catalyses ATP + protein L-histidine = ADP + protein N-phospho-L-histidine.. Involved in a signal transduction pathway that regulates morphogenesis and controls entry into the culmination stage. May act via the regA pathway, being activated by a morphogenesis-stimulated ligand, reducing phosphodiesterase regA levels and allowing cAMP level to rise to promote the culmination stage. This protein probably undergoes an ATP-dependent autophosphorylation at a conserved histidine residue in the kinase core, and a phosphoryl group is then transferred to a conserved aspartate residue in the receiver domain. This is Hybrid signal transduction histidine kinase K (dhkK) from Dictyostelium discoideum (Social amoeba).